Consider the following 203-residue polypeptide: N-(5'-phosphoribosyl)anthranilate isomerase (203 aa).

It belongs to the TrpF family.

The catalysed reaction is N-(5-phospho-beta-D-ribosyl)anthranilate = 1-(2-carboxyphenylamino)-1-deoxy-D-ribulose 5-phosphate. The protein operates within amino-acid biosynthesis; L-tryptophan biosynthesis; L-tryptophan from chorismate: step 3/5. The chain is N-(5'-phosphoribosyl)anthranilate isomerase from Sulfurihydrogenibium sp. (strain YO3AOP1).